The chain runs to 490 residues: Betaine aldehyde dehydrogenase (490 aa).

2 residues coordinate K(+): I27 and D93. 150-152 (GAW) serves as a coordination point for NAD(+). K162 acts as the Charge relay system in catalysis. Residue 176 to 179 (KPSE) participates in NAD(+) binding. Position 180 (V180) interacts with K(+). NAD(+) is bound at residue 230–233 (GTDT). L246 lines the K(+) pocket. E252 (proton acceptor) is an active-site residue. Residues G254, C286, and E387 each contribute to the NAD(+) site. The Nucleophile role is filled by C286. C286 carries the cysteine sulfenic acid (-SOH) modification. K457 and G460 together coordinate K(+). The active-site Charge relay system is E464.

The protein belongs to the aldehyde dehydrogenase family. Dimer of dimers. Requires K(+) as cofactor.

It catalyses the reaction betaine aldehyde + NAD(+) + H2O = glycine betaine + NADH + 2 H(+). It participates in amine and polyamine biosynthesis; betaine biosynthesis via choline pathway; betaine from betaine aldehyde: step 1/1. In terms of biological role, involved in the biosynthesis of the osmoprotectant glycine betaine. Catalyzes the irreversible oxidation of betaine aldehyde to the corresponding acid. The chain is Betaine aldehyde dehydrogenase from Pseudomonas syringae pv. syringae (strain B728a).